We begin with the raw amino-acid sequence, 483 residues long: Protein P55 (483 aa).

A helical membrane pass occupies residues 342–359; the sequence is LTPVMALIIILVYYSIYG.

It localises to the host membrane. The protein is Protein P55 of Vitis vinifera (Grape).